The following is a 458-amino-acid chain: Argininosuccinate lyase (458 aa).

Belongs to the lyase 1 family. Argininosuccinate lyase subfamily.

The protein resides in the cytoplasm. It carries out the reaction 2-(N(omega)-L-arginino)succinate = fumarate + L-arginine. Its pathway is amino-acid biosynthesis; L-arginine biosynthesis; L-arginine from L-ornithine and carbamoyl phosphate: step 3/3. The protein is Argininosuccinate lyase of Salmonella typhi.